We begin with the raw amino-acid sequence, 55 residues long: Histone H1 (55 aa).

The segment covering 1–15 (MAEVAPAPAAAAPAK) has biased composition (low complexity). Positions 1–28 (MAEVAPAPAAAAPAKAPKKKAAAKPKKA) are disordered. Ala-2 bears the N-acetylalanine mark. Residues 16-27 (APKKKAAAKPKK) are compositionally biased toward basic residues. The region spanning 28 to 55 (AGPSVGELIVKAVSASKERSGVSLAALK) is the H15 domain.

This sequence belongs to the histone H1/H5 family.

It is found in the nucleus. The protein resides in the chromosome. It localises to the secreted. Histones H1 are necessary for the condensation of nucleosome chains into higher-order structures. Functionally, SAMP H1 has antibacterial activity against Gram-negative bacteria E.coli, A.salmonicida subsp salmonicida, V.anguillarum and S.typhimurium and Gram-positive bacteria B.subtilis and L.ivanovii. The chain is Histone H1 from Salmo salar (Atlantic salmon).